Consider the following 447-residue polypeptide: N-succinylarginine dihydrolase (447 aa).

Substrate-binding positions include 19-28 (AGLSFGNEAS), N110, and 137-138 (HR). E174 is an active-site residue. R212 serves as a coordination point for substrate. H248 is an active-site residue. Substrate is bound by residues D250 and N359. C365 serves as the catalytic Nucleophile.

This sequence belongs to the succinylarginine dihydrolase family. As to quaternary structure, homodimer.

The catalysed reaction is N(2)-succinyl-L-arginine + 2 H2O + 2 H(+) = N(2)-succinyl-L-ornithine + 2 NH4(+) + CO2. The protein operates within amino-acid degradation; L-arginine degradation via AST pathway; L-glutamate and succinate from L-arginine: step 2/5. Catalyzes the hydrolysis of N(2)-succinylarginine into N(2)-succinylornithine, ammonia and CO(2). The sequence is that of N-succinylarginine dihydrolase from Salmonella typhimurium (strain LT2 / SGSC1412 / ATCC 700720).